The sequence spans 857 residues: Leucine--tRNA ligase (857 aa).

Positions 42–52 match the 'HIGH' region motif; sequence PYPSGNLHMGH. Residues 615-619 carry the 'KMSKS' region motif; it reads KMSKS. Lysine 618 serves as a coordination point for ATP.

It belongs to the class-I aminoacyl-tRNA synthetase family.

The protein resides in the cytoplasm. The catalysed reaction is tRNA(Leu) + L-leucine + ATP = L-leucyl-tRNA(Leu) + AMP + diphosphate. This chain is Leucine--tRNA ligase, found in Thermosynechococcus vestitus (strain NIES-2133 / IAM M-273 / BP-1).